Here is a 391-residue protein sequence, read N- to C-terminus: Argininosuccinate synthase (391 aa).

6-14 (AYSGGLDTT) contacts ATP. Tyr84 serves as a coordination point for L-citrulline. Gly114 lines the ATP pocket. The L-aspartate site is built by Thr116, Asn120, and Asp121. An L-citrulline-binding site is contributed by Asn120. L-citrulline-binding residues include Arg124, Ser171, Ser180, Glu253, and Tyr265.

This sequence belongs to the argininosuccinate synthase family. Type 1 subfamily. In terms of assembly, homotetramer.

The protein localises to the cytoplasm. The catalysed reaction is L-citrulline + L-aspartate + ATP = 2-(N(omega)-L-arginino)succinate + AMP + diphosphate + H(+). It participates in amino-acid biosynthesis; L-arginine biosynthesis; L-arginine from L-ornithine and carbamoyl phosphate: step 2/3. The chain is Argininosuccinate synthase from Metallosphaera sedula (strain ATCC 51363 / DSM 5348 / JCM 9185 / NBRC 15509 / TH2).